The sequence spans 279 residues: Urease accessory protein UreD (279 aa).

Belongs to the UreD family. In terms of assembly, ureD, UreF and UreG form a complex that acts as a GTP-hydrolysis-dependent molecular chaperone, activating the urease apoprotein by helping to assemble the nickel containing metallocenter of UreC. The UreE protein probably delivers the nickel.

It localises to the cytoplasm. In terms of biological role, required for maturation of urease via the functional incorporation of the urease nickel metallocenter. This is Urease accessory protein UreD from Paracoccus denitrificans (strain Pd 1222).